Here is a 62-residue protein sequence, read N- to C-terminus: Antitoxin VbhA (62 aa).

The short motif at 20 to 25 is the Inhibitory (S/T)XXXE(G/N) motif element; that stretch reads SQRLEG. Residue Glu24 coordinates ATP.

In terms of assembly, interacts with VbhT.

Functionally, antitoxin component of type II toxin-antitoxin (TA) system VbhT-VbhA. Acts by inhibiting the adenylyltransferase activity of VbhT; competes with ATP-binding and prevents productive ATP-binding to VbhT. This is Antitoxin VbhA from Bartonella schoenbuchensis (strain DSM 13525 / NCTC 13165 / R1).